Here is a 175-residue protein sequence, read N- to C-terminus: Gamma-crystallin B (175 aa).

Beta/gamma crystallin 'Greek key' domains lie at 2–40 (GKIT…RVDS) and 41–83 (GCWM…RLIP). Residue lysine 3 is glycosylated (N-linked (Glc) (glycation) lysine; in vitro). Cysteines 19 and 23 form a disulfide. Residues 84–88 (QHTGT) form a connecting peptide region. Beta/gamma crystallin 'Greek key' domains lie at 89–129 (FRMR…NVLE) and 130–172 (GSWV…RRVM).

Belongs to the beta/gamma-crystallin family.

Its function is as follows. Crystallins are the dominant structural components of the vertebrate eye lens. This chain is Gamma-crystallin B (CRYGB), found in Bos taurus (Bovine).